Here is a 914-residue protein sequence, read N- to C-terminus: MASENSPLLAYRLLGEEGAAFPPNGAGGSGVASARKLSTFLGVVVPTVLSMFSIVVFLRIGFVVGHAGLLQALAMLLVAYVILALTVLSVCAIATNGAVRGGGAYFMISRTLGPEVGGSIGLMFYLANVCGCAVSLLGLVESILDVFGADVTGSSGIKVLPQGYGWNLLYGSLLLGLVGGVCALGAGLYARASFLTFLLVSGSLASVLVSFVAVGPRNITLAPRPGTNGSSVPPRHGHFTGFNGSTLKDNLGAGYAEDYTTGAMMTFASVFAVLFNGCTGIMAGANMSGELKDPSRAIPLGTIIAVAYTFFIYILLFFLSSFTCDRALLQGDYGFFRDISLWPPLVLIGIYATALSASMSSLIGASRILHALAQDDLFGVILAPAKVVSGGGNPWGAVLYSWGLVQLVLLAGKLNTLAAVVTVFYLVAYAAVDLSCLSLEWASAPNFRPTFSLFSWHTCLLGVASCLLMMFLISPGAAGGSLLLMGLLSALLTARGGPSSWGYVSQALLFHQVRKYLLRLDVRKEHVKFWRPQLLLLVGNPRGALPLLRLANQLKKGGLYVLGHVTLGDLDSLPSDPVQPQYGAWLSLVDLAQVKAFVDLTLSPSVRQGAQHLLRISGLGGMKPNTLVLGFYDDAPPQDHFLTDPAFSEPAEGTREGGSPALSTLFPPPRAPGSPRALSPQDYVATVADALKMNKNVVLARACGALPPERLSRGSGSSAQLHHVDVWPLNLLRPRGGPGYVDVCGLFLLQMATILSMVPAWHSARLRIFLCLGPREAPGAAEGRLRALLSQLRIRAEVQEVVWGEGAEAGEPEEEEGDFVNGGRGDEEAEALACSANALVRAQQGRGTGGGPGGPEGRDGEEGPTTALTFLYLPRPPADPARYPRYLALLETLSRDLGPTLLIHGVTPVTCTDL.

The Cytoplasmic segment spans residues 1–36; it reads MASENSPLLAYRLLGEEGAAFPPNGAGGSGVASARK. A Phosphoserine modification is found at serine 6. The chain crosses the membrane as a helical span at residues 37-57; sequence LSTFLGVVVPTVLSMFSIVVF. The Extracellular segment spans residues 58–72; the sequence is LRIGFVVGHAGLLQA. The chain crosses the membrane as a helical span at residues 73–93; it reads LAMLLVAYVILALTVLSVCAI. The Cytoplasmic portion of the chain corresponds to 94–119; it reads ATNGAVRGGGAYFMISRTLGPEVGGS. Residues 120 to 140 traverse the membrane as a helical segment; it reads IGLMFYLANVCGCAVSLLGLV. At 141-167 the chain is on the extracellular side; that stretch reads ESILDVFGADVTGSSGIKVLPQGYGWN. The chain crosses the membrane as a helical span at residues 168–188; the sequence is LLYGSLLLGLVGGVCALGAGL. Topologically, residues 189–193 are cytoplasmic; the sequence is YARAS. The helical transmembrane segment at 194–214 threads the bilayer; that stretch reads FLTFLLVSGSLASVLVSFVAV. The Extracellular segment spans residues 215-262; it reads GPRNITLAPRPGTNGSSVPPRHGHFTGFNGSTLKDNLGAGYAEDYTTG. N-linked (GlcNAc...) asparagine glycosylation is found at asparagine 218, asparagine 228, and asparagine 243. A helical transmembrane segment spans residues 263-283; it reads AMMTFASVFAVLFNGCTGIMA. Topologically, residues 284-297 are cytoplasmic; sequence GANMSGELKDPSRA. The chain crosses the membrane as a helical span at residues 298–318; sequence IPLGTIIAVAYTFFIYILLFF. The Extracellular segment spans residues 319–338; the sequence is LSSFTCDRALLQGDYGFFRD. A helical transmembrane segment spans residues 339–359; that stretch reads ISLWPPLVLIGIYATALSASM. Over 360 to 376 the chain is Cytoplasmic; the sequence is SSLIGASRILHALAQDD. A helical transmembrane segment spans residues 377 to 399; sequence LFGVILAPAKVVSGGGNPWGAVL. The Extracellular segment spans residues 400-416; that stretch reads YSWGLVQLVLLAGKLNT. Residues 417–437 traverse the membrane as a helical segment; it reads LAAVVTVFYLVAYAAVDLSCL. Residues 438 to 466 lie on the Cytoplasmic side of the membrane; the sequence is SLEWASAPNFRPTFSLFSWHTCLLGVASC. Residues 467–487 form a helical membrane-spanning segment; the sequence is LLMMFLISPGAAGGSLLLMGL. Topologically, residues 488-740 are extracellular; it reads LSALLTARGG…LLRPRGGPGY (253 aa). The interval 645 to 678 is disordered; the sequence is PAFSEPAEGTREGGSPALSTLFPPPRAPGSPRAL. The chain crosses the membrane as a helical span at residues 741 to 761; the sequence is VDVCGLFLLQMATILSMVPAW. Over 762 to 914 the chain is Cytoplasmic; that stretch reads HSARLRIFLC…GVTPVTCTDL (153 aa). Residues 843–864 form a disordered region; the sequence is QQGRGTGGGPGGPEGRDGEEGP. Over residues 846-855 the composition is skewed to gly residues; it reads RGTGGGPGGP.

This sequence belongs to the SLC12A transporter family. In terms of assembly, interacts with SLC12A1.

It is found in the cell membrane. Its subcellular location is the lysosome membrane. In terms of biological role, may be an inhibitor of SLC12A1. Seems to correspond to a subunit of a multimeric transport system and thus, additional subunits may be required for its function. May play a role in lysosomal ion flux and osmoregulation. The chain is Solute carrier family 12 member 9 (Slc12a9) from Rattus norvegicus (Rat).